A 275-amino-acid polypeptide reads, in one-letter code: MALQQEIIQALGVKPSIDANAEIRRSIDFLKSYLKTNSFLKTLVLGISGGQDSTLAGKLCQQAISELRQETGDESLQFIAVRLPYGVQADEQDCQDAIAFIHPDRVLTVNIKGSVLASEQALREAGLELSDFVRGNEKARERMKAQYSIAGMTKGVVVGTDHAAEAVTGFFTKYGDGGTDINPLFRLNKRQGKQLLAALGCPEHLYLKAPTADLEDDRPSLPDEAALGVTYENIDDYLEGKTLDDTIARTIEGWYLKTEHKRRPPITVFDDFWKR.

46–53 (GISGGQDS) lines the ATP pocket. D52 provides a ligand contact to Mg(2+). Residue R140 coordinates deamido-NAD(+). Residue T160 coordinates ATP. Position 165 (E165) interacts with Mg(2+). K173 and D180 together coordinate deamido-NAD(+). The ATP site is built by K189 and T211. 260–261 (HK) contributes to the deamido-NAD(+) binding site.

Belongs to the NAD synthetase family. In terms of assembly, homodimer.

The enzyme catalyses deamido-NAD(+) + NH4(+) + ATP = AMP + diphosphate + NAD(+) + H(+). It participates in cofactor biosynthesis; NAD(+) biosynthesis; NAD(+) from deamido-NAD(+) (ammonia route): step 1/1. Its function is as follows. Catalyzes the ATP-dependent amidation of deamido-NAD to form NAD. Uses ammonia as a nitrogen source. The protein is NH(3)-dependent NAD(+) synthetase of Enterobacter sp. (strain 638).